The primary structure comprises 347 residues: GMP reductase (347 aa).

108 to 131 (ADFDKMKQILALSPALKFICIDVA) contributes to the NADP(+) binding site. The K(+) site is built by Gly-181 and Gly-183. The Thioimidate intermediate role is filled by Cys-186. 216–239 (IVSDGGCSVPGDVAKAFGGGADFV) provides a ligand contact to NADP(+).

The protein belongs to the IMPDH/GMPR family. GuaC type 1 subfamily. As to quaternary structure, homotetramer.

It carries out the reaction IMP + NH4(+) + NADP(+) = GMP + NADPH + 2 H(+). Its function is as follows. Catalyzes the irreversible NADPH-dependent deamination of GMP to IMP. It functions in the conversion of nucleobase, nucleoside and nucleotide derivatives of G to A nucleotides, and in maintaining the intracellular balance of A and G nucleotides. The protein is GMP reductase of Yersinia enterocolitica serotype O:8 / biotype 1B (strain NCTC 13174 / 8081).